A 412-amino-acid polypeptide reads, in one-letter code: MDGDIRKNSYDDGSMDALTGEQSIRNFNINFGPQHPAAHGVLRMVLELDGEIVERADPHIGLLHRGTEKLMESRTYLQNLPYLDRLDYVAPMNQEHAWCLAIERLTGTVIPRRASLIRVLYSEIGRILNHLMGVTTGAMDVGALTPPLWGFEAREELMIFYERACGARLHAAYFRPGGVHQDLPPDLLDDIEEWCERFPKLVDDLDTLLTENRIFKQRLVDIGIVTEADALDWGYTGVMVRGSGLAWDLRRSQPYECYDEFDFQIPVGRNGDCYDRYLCRMAEMRESCKIMQQAVQKLRAEPAGDVLARGKLTPPRRAEMKRDMESLIHHFKLYTEGFKVPAGEVYAAVEAPKGEFGVYLVADGTNKPWRAKLRAPGFAHLQSIDWMSRGHMLADVPAIIATLDIVFGEVDR.

This sequence belongs to the complex I 49 kDa subunit family. As to quaternary structure, NDH-1 is composed of at least 14 different subunits, Nqo1 to Nqo14. The complex has a L-shaped structure, with the hydrophobic arm (subunits Nqo7, Nqo8, Nqo10 to Nqo14) embedded in the inner membrane and the hydrophilic peripheral arm (subunits Nqo1 to Nqo6, Nqo9) protruding into the bacterial cytoplasm. The hydrophilic domain contains all the redox centers. NADH-quinone oxidoreductase forms a supercomplex with ubiquinol-cytochrome c reductase complex (complex III or cytochrome b-c1 complex) and cytochrome c oxidase (complex IV), which stabilizes the NADH-quinone oxidoreductase complex.

The protein resides in the cell inner membrane. It carries out the reaction a quinone + NADH + 5 H(+)(in) = a quinol + NAD(+) + 4 H(+)(out). Functionally, NDH-1 shuttles electrons from NADH, via FMN and iron-sulfur (Fe-S) centers, to quinones in the respiratory chain. The immediate electron acceptor for the enzyme in this species is believed to be ubiquinone. Couples the redox reaction to proton translocation (for every two electrons transferred, four hydrogen ions are translocated across the cytoplasmic membrane), and thus conserves the redox energy in a proton gradient. The chain is NADH-quinone oxidoreductase subunit D (nuoD) from Paracoccus denitrificans (strain Pd 1222).